The primary structure comprises 216 residues: Ribosomal RNA small subunit methyltransferase G (216 aa).

Positions 75, 80, and 141 each coordinate S-adenosyl-L-methionine.

This sequence belongs to the methyltransferase superfamily. RNA methyltransferase RsmG family.

The protein localises to the cytoplasm. It carries out the reaction guanosine(527) in 16S rRNA + S-adenosyl-L-methionine = N(7)-methylguanosine(527) in 16S rRNA + S-adenosyl-L-homocysteine. Functionally, specifically methylates the N7 position of guanine in position 527 of 16S rRNA. In Nitrosospira multiformis (strain ATCC 25196 / NCIMB 11849 / C 71), this protein is Ribosomal RNA small subunit methyltransferase G.